We begin with the raw amino-acid sequence, 197 residues long: Large ribosomal subunit protein eL15 (197 aa).

Composition is skewed to basic residues over residues P70–K90, R163–G179, and P187–K197. Disordered stretches follow at residues P70–K99 and R163–K197.

Belongs to the eukaryotic ribosomal protein eL15 family.

The polypeptide is Large ribosomal subunit protein eL15 (Methanopyrus kandleri (strain AV19 / DSM 6324 / JCM 9639 / NBRC 100938)).